A 218-amino-acid chain; its full sequence is MRTRVKICGLTREQDIASAVRAGADAIGFVFYPASKRHVDPVRAAQLRREVPAFVDVVALFVNPRPDEVQAVLDHVAPDLLQFHGDETPQDCGRYGRRYLRAFRAGAPGLDSTAGLAAACRQYADAAGWLFDSYSAGYGGSGQGFDHGLLAGVQADPASRAIVLAGGLHPGNVADAVRAVRPWAVDVSSGVEDAPGVKSADKIRQLMAAIKSVDQVAR.

It belongs to the TrpF family.

The enzyme catalyses N-(5-phospho-beta-D-ribosyl)anthranilate = 1-(2-carboxyphenylamino)-1-deoxy-D-ribulose 5-phosphate. The protein operates within amino-acid biosynthesis; L-tryptophan biosynthesis; L-tryptophan from chorismate: step 3/5. This is N-(5'-phosphoribosyl)anthranilate isomerase from Bordetella parapertussis (strain 12822 / ATCC BAA-587 / NCTC 13253).